The chain runs to 526 residues: NAD(P)H-quinone oxidoreductase chain 4 (526 aa).

The next 13 helical transmembrane spans lie at 5–25, 32–52, 87–107, 111–131, 133–153, 165–185, 211–231, 239–259, 273–293, 302–320, 331–351, 371–393, and 414–434; these read FPWLTVIILLPLVAALAVPLI, WYSFAVCLVDFVLMVAAFFTS, LILLTGFITALATLAAWPVTL, MFHFLMLAMLAGMVGVFAVQD, VLFFLFFELELVPVYLMLAIW, FILYTAVGSLFILVVGLAMYF, FLGLLIAYAVKLPIFPLHTWL, TAPVHMLLAGILLKMGGYALI, FAPLLIVLGIVNIIYAALTSF, IAYSSISHMGFVLIGVGSL, QMISHGLIGASLFFLVGATYD, IFAMFTACSMASLALPGMSGFVA, and LVVLFAAFGVILTPIYLLSML.

It belongs to the complex I subunit 4 family.

The protein resides in the cell inner membrane. The catalysed reaction is a plastoquinone + NADH + (n+1) H(+)(in) = a plastoquinol + NAD(+) + n H(+)(out). It catalyses the reaction a plastoquinone + NADPH + (n+1) H(+)(in) = a plastoquinol + NADP(+) + n H(+)(out). Functionally, NDH-1 shuttles electrons from NAD(P)H, via FMN and iron-sulfur (Fe-S) centers, to quinones in the respiratory chain. The immediate electron acceptor for the enzyme in this species is believed to be plastoquinone. Couples the redox reaction to proton translocation (for every two electrons transferred, four hydrogen ions are translocated across the cytoplasmic membrane), and thus conserves the redox energy in a proton gradient. The polypeptide is NAD(P)H-quinone oxidoreductase chain 4 (Gloeobacter violaceus (strain ATCC 29082 / PCC 7421)).